Here is a 1085-residue protein sequence, read N- to C-terminus: Tudor domain-containing protein 7B (1085 aa).

The HTH OST-type 1 domain occupies 3–76 (DEELVKKMVR…SGEVMCHATT (74 aa)). Disordered stretches follow at residues 112-183 (APLV…PEKR), 200-228 (RNPQHINVPSNLNENTTPPKPRLPHSAPY), and 297-341 (PAKE…KALS). Over residues 203-216 (QHINVPSNLNENTT) the composition is skewed to polar residues. The HTH OST-type 2 domain maps to 229 to 299 (SPKLVQSRLQ…PQELLLYPAK (71 aa)). Positions 322–335 (TQRPSLTAKSNTPE) are enriched in polar residues. An HTH OST-type 3 domain is found at 340 to 410 (LSPDLKQKLG…PKRAILYAKV (71 aa)). Tudor domains are found at residues 496–554 (SPSP…FYRL) and 686–743 (RPFC…LLRD). A compositionally biased stretch (polar residues) spans 843–853 (NVPTATQTSSL). The segment at 843 to 888 (NVPTATQTSSLKTDRGDKALHTPKKTSPPLGSKSTPAGSPPERLSL) is disordered.

The protein resides in the cytoplasm. Functionally, component of specific cytoplasmic RNA granules involved in post-transcriptional regulation of specific genes: probably acts by binding to specific mRNAs and regulating their translation. Probably required during spermatogenesis. This Danio rerio (Zebrafish) protein is Tudor domain-containing protein 7B (tdrd7b).